Consider the following 349-residue polypeptide: C-X-C chemokine receptor type 4 (349 aa).

The interval 1-18 (MEIYTSDNYSEEVGSGDY) is important for chemokine binding and signaling. The interval 1 to 23 (MEIYTSDNYSEEVGSGDYDSNKE) is disordered. Over 1 to 35 (MEIYTSDNYSEEVGSGDYDSNKEPCFRDENENFNR) the chain is Extracellular. Asn-8 carries N-linked (GlcNAc...) asparagine glycosylation. Tyr-9 is modified (sulfotyrosine). An O-linked (Xyl...) (chondroitin sulfate) serine glycan is attached at Ser-15. Tyr-18 is subject to Sulfotyrosine. Cystine bridges form between Cys-25–Cys-271 and Cys-106–Cys-183. A helical membrane pass occupies residues 36 to 60 (IFLPTIYFIIFLTGIVGNGLVILVM). At 61 to 74 (GYQKKLRSMTDKYR) the chain is on the cytoplasmic side. The chain crosses the membrane as a helical span at residues 75-96 (LHLSVADLLFVITLPFWAVDAM). Residues 91–94 (WAVD) form a chemokine binding region. Topologically, residues 97–107 (ADWYFGKFLCK) are extracellular. The chain crosses the membrane as a helical span at residues 108-127 (AVHIIYTVNLYSSVLILAFI). The interval 110–114 (HIIYT) is chemokine binding. Residues 128 to 151 (SLDRYLAIVHATNSQRPRKLLAEK) are Cytoplasmic-facing. Residues 130–132 (DRY) carry the Important for signaling motif. Residues 132–144 (YLAIVHATNSQRP) form an involved in dimerization; when bound to chemokine region. Residues 152–171 (AVYVGVWIPALLLTIPDIIF) form a helical membrane-spanning segment. Topologically, residues 172–192 (ADVSQGDGRYICDRLYPDSLW) are extracellular. The segment at 183-187 (CDRLY) is chemokine binding, important for signaling. Residues 188 to 207 (PDSLWMVVFQFQHIMVGLIL) form an involved in dimerization region. Residues 193-213 (MVVFQFQHIMVGLILPGIVIL) form a helical membrane-spanning segment. The Cytoplasmic portion of the chain corresponds to 214–238 (SCYCIIISKLSHSKGHQKRKALKTT). A helical membrane pass occupies residues 239–258 (VILILAFFACWLPYYVGISI). The Extracellular segment spans residues 259–279 (DSFILLEVIKQGCEFESVVHK). Positions 263-265 (LLE) are involved in dimerization. Residues 280–299 (WISITEALAFFHCCLNPILY) form a helical membrane-spanning segment. Over 300–349 (AFLGAKFKSSAQHALNSMSRGSSLKILSKGKRGGHSSVSTESESSSFHSS) the chain is Cytoplasmic. Phosphoserine occurs at positions 316 and 318. 2 positions are modified to phosphoserine; by PKC and GRK6: Ser-321 and Ser-322. A disordered region spans residues 325–349 (ILSKGKRGGHSSVSTESESSSFHSS). Ser-327 is subject to Phosphoserine; by GRK6. Residue Lys-328 forms a Glycyl lysine isopeptide (Lys-Gly) (interchain with G-Cter in ubiquitin) linkage. Low complexity predominate over residues 334–349 (HSSVSTESESSSFHSS). Ser-336 carries the phosphoserine; by GRK6 modification. A phosphoserine mark is found at Ser-345 and Ser-348.

This sequence belongs to the G-protein coupled receptor 1 family. Monomer. Can form homodimers. Interacts with CD164. Interacts with ARRB2; the interaction is dependent on the C-terminal phosphorylation of CXCR4 and allows activation of MAPK1 and MAPK3. Interacts with ARR3; the interaction is dependent on the C-terminal phosphorylation of CXCR4 and modulates calcium mobilization. Interacts with RNF113A; the interaction, enhanced by CXCL12, promotes CXCR4 ubiquitination and subsequent degradation. Interacts (via the cytoplasmic C-terminal) with ITCH (via the WW domains I and II); the interaction, enhanced by CXCL12, promotes CXCR4 ubiquitination and leads to its degradation. Interacts with extracellular ubiquitin. Interacts with DBN1; this interaction is enhanced by antigenic stimulation. Following LPS binding, may form a complex with GDF5, HSP90AA1 and HSPA8. Phosphorylated on agonist stimulation. Rapidly phosphorylated on serine and threonine residues in the C-terminal. Phosphorylation at Ser-321 and Ser-322 leads to recruitment of ITCH, ubiquitination and protein degradation. Post-translationally, ubiquitinated after ligand binding, leading to its degradation. Ubiquitinated by ITCH at the cell membrane on agonist stimulation. The ubiquitin-dependent mechanism, endosomal sorting complex required for transport (ESCRT), then targets CXCR4 for lysosomal degradation. This process is dependent also on prior Ser-/Thr-phosphorylation in the C-terminal of CXCR4. Also binding of ARRB1 to STAM negatively regulates CXCR4 sorting to lysosomes though modulating ubiquitination of SFR5S. In terms of processing, sulfation is required for efficient binding of CXCL12/SDF-1alpha and promotes its dimerization. O- and N-glycosylated. N-glycosylation can mask coreceptor function. The O-glycosylation chondroitin sulfate attachment does not affect interaction with CXCL12/SDF-1alpha nor its coreceptor activity.

The protein resides in the cell membrane. It localises to the cell junction. It is found in the early endosome. The protein localises to the late endosome. Its subcellular location is the lysosome. Functionally, receptor for the C-X-C chemokine CXCL12/SDF-1 that transduces a signal by increasing intracellular calcium ion levels and enhancing MAPK1/MAPK3 activation. Involved in the AKT signaling cascade. Plays a role in regulation of cell migration, e.g. during wound healing. Acts as a receptor for extracellular ubiquitin; leading to enhanced intracellular calcium ions and reduced cellular cAMP levels. Binds bacterial lipopolysaccharide (LPS) et mediates LPS-induced inflammatory response, including TNF secretion by monocytes. Involved in hematopoiesis and in cardiac ventricular septum formation. Also plays an essential role in vascularization of the gastrointestinal tract, probably by regulating vascular branching and/or remodeling processes in endothelial cells. Involved in cerebellar development. In the CNS, could mediate hippocampal-neuron survival. The protein is C-X-C chemokine receptor type 4 (Cxcr4) of Rattus norvegicus (Rat).